We begin with the raw amino-acid sequence, 687 residues long: Putative lipase YDR444W (687 aa).

The active-site Charge relay system is Ser284. 3 disordered regions span residues 429 to 472 (IRKK…AESP), 491 to 513 (KINKYKRGQTNEANSDSDNEQGV), and 650 to 687 (ELAEDANEPKDEPNQSSQADRSNEYNEGEISKGAENAT). Over residues 436–463 (SPTSSEFVSSDSPESSGASSPSNENGNN) the composition is skewed to low complexity. Basic and acidic residues predominate over residues 670-681 (RSNEYNEGEISK).

This sequence belongs to the putative lipase ROG1 family.

The protein resides in the cytoplasm. The polypeptide is Putative lipase YDR444W (Saccharomyces cerevisiae (strain ATCC 204508 / S288c) (Baker's yeast)).